The primary structure comprises 546 residues: DDB1- and CUL4-associated factor 11 (546 aa).

Residues 1–10 (MGSRNSSSAG) are compositionally biased toward polar residues. Positions 1–40 (MGSRNSSSAGTGSGDPSEGLPRRGAGLRRSEEEEEEDEDV) are disordered. 2 positions are modified to phosphoserine: Ser73 and Ser75. The segment at 79–100 (HDSAWDGRLGDRYNPPVDATPD) is disordered. Over residues 80–89 (DSAWDGRLGD) the composition is skewed to basic and acidic residues. 7 WD repeats span residues 170–210 (TYSQ…RKFK), 216–258 (DVGW…TALD), 263–302 (ERRF…RTLQ), 305–345 (SHED…EDDP), 353–392 (GHQD…SREG), 435–480 (GVLH…KKLT), and 481–520 (THKA…YFQD). The disordered stretch occupies residues 521–546 (DMPESEEHPSTPAPMSHPSTAFSSPQ). The segment covering 537-546 (HPSTAFSSPQ) has biased composition (polar residues).

Interacts with DDB1 and CUL4A.

It participates in protein modification; protein ubiquitination. Functionally, may function as a substrate receptor for CUL4-DDB1 E3 ubiquitin-protein ligase complex. In Bos taurus (Bovine), this protein is DDB1- and CUL4-associated factor 11 (DCAF11).